The sequence spans 217 residues: Probable nicotinate-nucleotide adenylyltransferase (217 aa).

The protein belongs to the NadD family.

The enzyme catalyses nicotinate beta-D-ribonucleotide + ATP + H(+) = deamido-NAD(+) + diphosphate. It functions in the pathway cofactor biosynthesis; NAD(+) biosynthesis; deamido-NAD(+) from nicotinate D-ribonucleotide: step 1/1. Catalyzes the reversible adenylation of nicotinate mononucleotide (NaMN) to nicotinic acid adenine dinucleotide (NaAD). The sequence is that of Probable nicotinate-nucleotide adenylyltransferase from Moorella thermoacetica (strain ATCC 39073 / JCM 9320).